Consider the following 185-residue polypeptide: Elongation factor P (185 aa).

Belongs to the elongation factor P family.

Its subcellular location is the cytoplasm. It functions in the pathway protein biosynthesis; polypeptide chain elongation. Involved in peptide bond synthesis. Stimulates efficient translation and peptide-bond synthesis on native or reconstituted 70S ribosomes in vitro. Probably functions indirectly by altering the affinity of the ribosome for aminoacyl-tRNA, thus increasing their reactivity as acceptors for peptidyl transferase. The polypeptide is Elongation factor P (Rippkaea orientalis (strain PCC 8801 / RF-1) (Cyanothece sp. (strain PCC 8801))).